A 63-amino-acid polypeptide reads, in one-letter code: Protein D-63 (63 aa).

As to quaternary structure, homodimer.

Its function is as follows. This protein may be involved in virus assembly. The sequence is that of Protein D-63 from Saccharolobus solfataricus (Sulfolobus solfataricus).